Here is a 451-residue protein sequence, read N- to C-terminus: Bifunctional protein GlmU (451 aa).

A pyrophosphorylase region spans residues 1 to 229 (MQRHAIVLAA…FEEIMGVNDR (229 aa)). UDP-N-acetyl-alpha-D-glucosamine is bound by residues 8–11 (LAAG), K22, Q72, and 77–78 (GT). D102 serves as a coordination point for Mg(2+). UDP-N-acetyl-alpha-D-glucosamine contacts are provided by G139, E154, and N227. N227 serves as a coordination point for Mg(2+). Positions 230 to 250 (VMLSEAEKAFRKRINEQHMKN) are linker. The segment at 251-451 (GVTIIDPVTT…QTTKEGYLKK (201 aa)) is N-acetyltransferase. Residues R332 and K350 each coordinate UDP-N-acetyl-alpha-D-glucosamine. H362 (proton acceptor) is an active-site residue. The UDP-N-acetyl-alpha-D-glucosamine site is built by Y365 and N376. Residues 385–386 (NY), A422, and R439 contribute to the acetyl-CoA site.

The protein in the N-terminal section; belongs to the N-acetylglucosamine-1-phosphate uridyltransferase family. This sequence in the C-terminal section; belongs to the transferase hexapeptide repeat family. Homotrimer. Requires Mg(2+) as cofactor.

The protein localises to the cytoplasm. The enzyme catalyses alpha-D-glucosamine 1-phosphate + acetyl-CoA = N-acetyl-alpha-D-glucosamine 1-phosphate + CoA + H(+). It carries out the reaction N-acetyl-alpha-D-glucosamine 1-phosphate + UTP + H(+) = UDP-N-acetyl-alpha-D-glucosamine + diphosphate. It functions in the pathway nucleotide-sugar biosynthesis; UDP-N-acetyl-alpha-D-glucosamine biosynthesis; N-acetyl-alpha-D-glucosamine 1-phosphate from alpha-D-glucosamine 6-phosphate (route II): step 2/2. The protein operates within nucleotide-sugar biosynthesis; UDP-N-acetyl-alpha-D-glucosamine biosynthesis; UDP-N-acetyl-alpha-D-glucosamine from N-acetyl-alpha-D-glucosamine 1-phosphate: step 1/1. Its pathway is bacterial outer membrane biogenesis; LPS lipid A biosynthesis. Functionally, catalyzes the last two sequential reactions in the de novo biosynthetic pathway for UDP-N-acetylglucosamine (UDP-GlcNAc). The C-terminal domain catalyzes the transfer of acetyl group from acetyl coenzyme A to glucosamine-1-phosphate (GlcN-1-P) to produce N-acetylglucosamine-1-phosphate (GlcNAc-1-P), which is converted into UDP-GlcNAc by the transfer of uridine 5-monophosphate (from uridine 5-triphosphate), a reaction catalyzed by the N-terminal domain. The protein is Bifunctional protein GlmU of Staphylococcus saprophyticus subsp. saprophyticus (strain ATCC 15305 / DSM 20229 / NCIMB 8711 / NCTC 7292 / S-41).